Consider the following 102-residue polypeptide: FMRFamide-like neuropeptides 9 (102 aa).

Residues 1–19 form the signal peptide; it reads MNQFYALFLVACIAAMANA. Positions 20–63 are excised as a propeptide; it reads YEEPDLDALAEFCGKESNRKYCDQIAQLATQHAIGINQEQVRME. The residue at position 72 (Phe-72) is a Phenylalanine amide. Residues 75 to 90 constitute a propeptide that is removed on maturation; the sequence is RSGYPLVIDDEEMRMD. Phenylalanine amide is present on Phe-99.

The protein belongs to the FARP (FMRFamide related peptide) family. In terms of tissue distribution, each flp gene is expressed in a distinct set of neurons.

The protein resides in the secreted. Functionally, FMRFamides and FMRFamide-like peptides are neuropeptides. In terms of biological role, KPSFVRF-amide: Has no effect on somatic body wall muscle, inhibits contraction of vaginal vera muscle, and inhibits the activity of the dissected pharyngeal myogenic muscle system. Acts as a ligand for the npr-22 receptor in vitro. In Caenorhabditis elegans, this protein is FMRFamide-like neuropeptides 9.